We begin with the raw amino-acid sequence, 636 residues long: Chaperone protein DnaK (636 aa).

At T203 the chain carries Phosphothreonine; by autocatalysis. The disordered stretch occupies residues V602–V636. Over residues A618–V636 the composition is skewed to basic and acidic residues.

This sequence belongs to the heat shock protein 70 family.

In terms of biological role, acts as a chaperone. The chain is Chaperone protein DnaK from Dehalococcoides mccartyi (strain ATCC BAA-2100 / JCM 16839 / KCTC 5957 / BAV1).